A 644-amino-acid chain; its full sequence is MIRIRFGMDVLLVLLLATCLLSPAHGTPLEWDFAVTLRTKIQFMDSSWQTIATAAHEFDELSAITFDESEELIYFNDMRHQNGSIFSLKRDLVAANHVVEQRIARTGNESVGGLAYDPLTMNLFWSDIEQRKIFFAPIDGSAAPKVLVDLSAEGGRPDGVAVDVCRRKLYWTNSNVTHPTVERINLDGNNRTVIINSTIDMPRGIVVDQLSDRLFWIDDLKGVFFAIESSKLDGSDRLVVLKDKHHEPLNLAVTNDAIYWTDRTTRSVWSHPKVPVIRVTTTSKPVEEDSTDSTDFKDPEPVNEDCPLVRVANLSEEVRGIVVRTGFYQRLQKDHHCASIVRKVKERVDAQNTKFEVRSLQDQKMKILQDERCMNHGEYKPATDLCICPTGFKGSRCEIRECHNYCVHGTCQMSESAYPKCYCQPGFTGERCEVSVCAGLCLNGGHCRASKDEKEAPSCECPAKFGGARCEQNSTEICTLFCRLLKHEPEMYVPFGCHSICEELAQDNSTNIAVPQYQHLEVCLTPKVWTSSVIIILVIGIVSSLLLVAVIVHGIRRLYKPKRPRIRKTFVVRKQARTNSAGDTPLTNRPLATEQCEITIENCCNMNICETPCFDPKLVEQTLSKSSCKEDKKILIHNMEDDLY.

An N-terminal signal peptide occupies residues 1 to 26 (MIRIRFGMDVLLVLLLATCLLSPAHG). Residues 27–531 (TPLEWDFAVT…VCLTPKVWTS (505 aa)) lie on the Extracellular side of the membrane. 2 N-linked (GlcNAc...) asparagine glycosylation sites follow: asparagine 82 and asparagine 108. LDL-receptor class B repeat units follow at residues 121-166 (MNLF…DVCR), 167-211 (RKLY…DQLS), and 212-257 (DRLF…TNDA). N-linked (GlcNAc...) asparagine glycans are attached at residues asparagine 175, asparagine 190, and asparagine 196. Asparagine 313 carries an N-linked (GlcNAc...) asparagine glycan. EGF-like domains are found at residues 398 to 430 (EIRE…FTGE) and 433 to 471 (EVSV…ARCE). Intrachain disulfides connect cysteine 402-cysteine 411, cysteine 406-cysteine 421, cysteine 437-cysteine 447, cysteine 441-cysteine 459, and cysteine 461-cysteine 470. 2 N-linked (GlcNAc...) asparagine glycosylation sites follow: asparagine 473 and asparagine 508. A helical membrane pass occupies residues 532 to 552 (SVIIILVIGIVSSLLLVAVIV). Topologically, residues 553 to 644 (HGIRRLYKPK…LIHNMEDDLY (92 aa)) are cytoplasmic.

Belongs to the cueball family.

It localises to the cell membrane. Functionally, has a role in spermatogenesis and oogenesis. In Drosophila erecta (Fruit fly), this protein is Protein cueball.